The primary structure comprises 435 residues: Matrix remodeling-associated protein 8 (435 aa).

A signal peptide spans 1–22 (MEIRCKVLVCHIILLHSATVYL). At 23–337 (YSVPASQQNP…QESRLHFFQQ (315 aa)) the chain is on the extracellular side. Ig-like V-type domains are found at residues 32 to 158 (PESV…LNIT) and 156 to 293 (NITK…LSVS). Asn41, Asn120, Asn156, Asn245, and Asn324 each carry an N-linked (GlcNAc...) asparagine glycan. Cys54 and Cys138 are oxidised to a cystine. Cys187 and Cys273 are oxidised to a cystine. A helical membrane pass occupies residues 338–358 (LGYILATLLLFILLLTAVILI). Topologically, residues 359 to 435 (TRKHQKRGYA…DLELRKEYCK (77 aa)) are cytoplasmic.

In terms of assembly, homodimer in cis. Does not appear to form trans-homodimers.

The protein localises to the cell membrane. Functionally, transmembrane protein which can modulate activity of various signaling pathways, probably via binding to integrin ITGAV:ITGB3. Mediates heterophilic cell-cell interactions in vitro. This chain is Matrix remodeling-associated protein 8 (mxra8), found in Xenopus laevis (African clawed frog).